The chain runs to 264 residues: [LysW]-aminoadipate/[LysW]-glutamate kinase (264 aa).

Substrate contacts are provided by residues 35–36, Arg62, and Asn167; that span reads GG.

This sequence belongs to the acetylglutamate kinase family. LysZ subfamily.

It is found in the cytoplasm. The enzyme catalyses [amino-group carrier protein]-C-terminal-N-(1,4-dicarboxybutan-1-yl)-L-glutamine + ATP = [amino-group carrier protein]-C-terminal-N-(1-carboxy-5-phosphooxy-5-oxopentan-1-yl)-L-glutamine + ADP. It carries out the reaction [amino-group carrier protein]-C-terminal-gamma-(L-glutamyl)-L-glutamate + ATP = [amino-group carrier protein]-C-terminal-gamma-(5-phospho-L-glutamyl)-L-glutamate + ADP. It participates in amino-acid biosynthesis; L-lysine biosynthesis via AAA pathway; L-lysine from L-alpha-aminoadipate (Thermus route): step 2/5. It functions in the pathway amino-acid biosynthesis; L-arginine biosynthesis. Functionally, involved in both the arginine and lysine biosynthetic pathways. Phosphorylates the LysW-bound precursors glutamate (for arginine biosynthesis), respectively alpha-aminoadipate (for lysine biosynthesis). The chain is [LysW]-aminoadipate/[LysW]-glutamate kinase from Saccharolobus islandicus (strain Y.N.15.51 / Yellowstone #2) (Sulfolobus islandicus).